The primary structure comprises 255 residues: Ribonuclease HII (255 aa).

An RNase H type-2 domain is found at 72-255; the sequence is NYIAGVDEAG…RLSFVKNFVE (184 aa). Residues aspartate 78, glutamate 79, and aspartate 170 each coordinate a divalent metal cation.

It belongs to the RNase HII family. Mn(2+) is required as a cofactor. Mg(2+) serves as cofactor.

It localises to the cytoplasm. The enzyme catalyses Endonucleolytic cleavage to 5'-phosphomonoester.. In terms of biological role, endonuclease that specifically degrades the RNA of RNA-DNA hybrids. In Ruminiclostridium cellulolyticum (strain ATCC 35319 / DSM 5812 / JCM 6584 / H10) (Clostridium cellulolyticum), this protein is Ribonuclease HII.